Consider the following 473-residue polypeptide: Photosystem II CP43 reaction center protein (473 aa).

Positions 1–14 (MKTLYSLRRFYHVE) are excised as a propeptide. Thr15 is modified (N-acetylthreonine). The residue at position 15 (Thr15) is a Phosphothreonine. 5 helical membrane passes run 69-93 (LFEV…PHLA), 134-155 (LLGP…KDRN), 178-200 (KALY…RKIT), 255-275 (KPFA…LSYS), and 291-312 (WFNN…ASQA). Residue Glu367 coordinates [CaMn4O5] cluster. A helical transmembrane segment spans residues 447–471 (RARAAAAGFEKGIDRDFEPVLSMTP).

This sequence belongs to the PsbB/PsbC family. PsbC subfamily. PSII is composed of 1 copy each of membrane proteins PsbA, PsbB, PsbC, PsbD, PsbE, PsbF, PsbH, PsbI, PsbJ, PsbK, PsbL, PsbM, PsbT, PsbX, PsbY, PsbZ, Psb30/Ycf12, at least 3 peripheral proteins of the oxygen-evolving complex and a large number of cofactors. It forms dimeric complexes. It depends on Binds multiple chlorophylls and provides some of the ligands for the Ca-4Mn-5O cluster of the oxygen-evolving complex. It may also provide a ligand for a Cl- that is required for oxygen evolution. PSII binds additional chlorophylls, carotenoids and specific lipids. as a cofactor.

The protein localises to the plastid. The protein resides in the chloroplast thylakoid membrane. One of the components of the core complex of photosystem II (PSII). It binds chlorophyll and helps catalyze the primary light-induced photochemical processes of PSII. PSII is a light-driven water:plastoquinone oxidoreductase, using light energy to abstract electrons from H(2)O, generating O(2) and a proton gradient subsequently used for ATP formation. The protein is Photosystem II CP43 reaction center protein of Capsella bursa-pastoris (Shepherd's purse).